Reading from the N-terminus, the 201-residue chain is Probable nicotinate-nucleotide adenylyltransferase (201 aa).

Belongs to the NadD family.

The catalysed reaction is nicotinate beta-D-ribonucleotide + ATP + H(+) = deamido-NAD(+) + diphosphate. It functions in the pathway cofactor biosynthesis; NAD(+) biosynthesis; deamido-NAD(+) from nicotinate D-ribonucleotide: step 1/1. In terms of biological role, catalyzes the reversible adenylation of nicotinate mononucleotide (NaMN) to nicotinic acid adenine dinucleotide (NaAD). The polypeptide is Probable nicotinate-nucleotide adenylyltransferase (Clostridium botulinum (strain Okra / Type B1)).